Here is a 26-residue protein sequence, read N- to C-terminus: Delta-hemolysin (26 aa).

Met1 carries the post-translational modification N-formylmethionine.

Belongs to the delta-lysin family.

The protein localises to the secreted. It is found in the host cell membrane. Functionally, lyses erythrocytes and many other mammalian cells. The polypeptide is Delta-hemolysin (hld) (Staphylococcus aureus (strain Mu50 / ATCC 700699)).